Here is a 1098-residue protein sequence, read N- to C-terminus: Platelet-derived growth factor receptor beta (1098 aa).

A signal peptide spans Met-1–Gly-31. The Extracellular segment spans residues Leu-32–Val-531. 5 Ig-like C2-type domains span residues Val-33–Val-119, Pro-128–Gln-209, Ile-213–Ser-308, His-330–Asp-402, and Pro-415–Val-523. N-linked (GlcNAc...) asparagine glycosylation is found at Asn-44, Asn-88, and Asn-102. Residues Cys-53 and Cys-99 are joined by a disulfide bond. Cysteines 148 and 189 form a disulfide. A glycan (N-linked (GlcNAc...) asparagine) is linked at Asn-214. Cys-234 and Cys-290 form a disulfide bridge. 7 N-linked (GlcNAc...) asparagine glycosylation sites follow: Asn-291, Asn-306, Asn-353, Asn-370, Asn-444, Asn-467, and Asn-478. Cys-435 and Cys-507 form a disulfide bridge. Residues Val-532–Ile-552 traverse the membrane as a helical segment. Topologically, residues Met-553 to Leu-1098 are cytoplasmic. Phosphotyrosine; by autocatalysis occurs at positions 561, 578, and 580. Positions Leu-599–Leu-961 constitute a Protein kinase domain. Residues Leu-605–Val-613 and Lys-633 contribute to the ATP site. Residue Tyr-685 is modified to Phosphotyrosine; by ABL1 and ABL2. Residues Tyr-715, Tyr-739, Tyr-750, Tyr-762, Tyr-770, Tyr-774, and Tyr-777 each carry the phosphotyrosine; by autocatalysis modification. Residue Asp-825 is the Proton acceptor of the active site. Tyr-856 carries the phosphotyrosine; by autocatalysis modification. 2 positions are modified to phosphotyrosine; by ABL1 and ABL2: Tyr-933 and Tyr-969. Phosphotyrosine; by autocatalysis is present on residues Tyr-1008 and Tyr-1020. The interval Ser-1016–Leu-1098 is disordered. Positions Ser-1042–Cys-1059 are enriched in polar residues. The segment covering Pro-1062–Gln-1082 has biased composition (low complexity).

Belongs to the protein kinase superfamily. Tyr protein kinase family. CSF-1/PDGF receptor subfamily. As to quaternary structure, interacts with homodimeric PDGFB and PDGFD, and with heterodimers formed by PDGFA and PDGFB. May also interact with homodimeric PDGFC. Monomer in the absence of bound ligand. Interaction with homodimeric PDGFB, heterodimers formed by PDGFA and PDGFB or homodimeric PDGFD, leads to receptor dimerization, where both PDGFRA homodimers and heterodimers with PDGFRB are observed. Interacts with SH2B2/APS. Interacts directly (tyrosine phosphorylated) with SHB. Interacts (tyrosine phosphorylated) with PIK3R1 and RASA1. Interacts (tyrosine phosphorylated) with CBL. Interacts (tyrosine phosphorylated) with SRC and SRC family kinases. Interacts (tyrosine phosphorylated) with PIK3C2B, maybe indirectly. Interacts (tyrosine phosphorylated) with SHC1, GRB7, GRB10 and NCK1. Interaction with GRB2 is mediated by SHC1. Interacts (via C-terminus) with NHERF1. Post-translationally, autophosphorylated on tyrosine residues upon ligand binding. Autophosphorylation occurs in trans, i.e. one subunit of the dimeric receptor phosphorylates tyrosine residues on the other subunit. Phosphorylation at Tyr-578, and to a lesser degree, Tyr-580 is important for interaction with SRC. Phosphorylation at Tyr-715 is important for interaction with GRB2. Phosphorylation at Tyr-739 and Tyr-750 is important for interaction with PIK3R1. Phosphorylation at Tyr-750 is important for interaction with NCK1. Phosphorylation at Tyr-770 and Tyr-856 is important for interaction with RASA1/GAP. Phosphorylation at Tyr-856 is important for efficient phosphorylation of PLCG1 and PTPN11, resulting in increased phosphorylation of AKT1, MAPK1/ERK2 and/or MAPK3/ERK1, PDCD6IP/ALIX and STAM, and in increased cell proliferation. Phosphorylation at Tyr-1008 is important for interaction with PTPN11. Phosphorylation at Tyr-1008 and Tyr-1020 is important for interaction with PLCG1. Dephosphorylated by PTPRJ at Tyr-750, Tyr-856, Tyr-1008 and Tyr-1020. Dephosphorylated by PTPN2 at Tyr-578 and Tyr-1020. In terms of processing, N-glycosylated. Ubiquitinated. After autophosphorylation, the receptor is polyubiquitinated, leading to its degradation. In terms of tissue distribution, weakly expressed in glomerular mesangial cells and interstitial cells. Up-regulated in areas of renal fibrosis. In mice with unilateral ureteral obstruction, increased expression in interstitial cells at day 4 and expression is markedly elevated at day 7 and is maximal at day 14.

Its subcellular location is the cell membrane. It localises to the cytoplasmic vesicle. It is found in the lysosome lumen. It catalyses the reaction L-tyrosyl-[protein] + ATP = O-phospho-L-tyrosyl-[protein] + ADP + H(+). With respect to regulation, present in an inactive conformation in the absence of bound ligand. Binding of PDGFB and/or PDGFD leads to dimerization and activation by autophosphorylation on tyrosine residues. In terms of biological role, tyrosine-protein kinase that acts as a cell-surface receptor for homodimeric PDGFB and PDGFD and for heterodimers formed by PDGFA and PDGFB, and plays an essential role in the regulation of embryonic development, cell proliferation, survival, differentiation, chemotaxis and migration. Plays an essential role in blood vessel development by promoting proliferation, migration and recruitment of pericytes and smooth muscle cells to endothelial cells. Plays a role in the migration of vascular smooth muscle cells and the formation of neointima at vascular injury sites. Required for normal development of the cardiovascular system. Required for normal recruitment of pericytes (mesangial cells) in the kidney glomerulus, and for normal formation of a branched network of capillaries in kidney glomeruli. Promotes rearrangement of the actin cytoskeleton and the formation of membrane ruffles. Binding of its cognate ligands - homodimeric PDGFB, heterodimers formed by PDGFA and PDGFB or homodimeric PDGFD -leads to the activation of several signaling cascades; the response depends on the nature of the bound ligand and is modulated by the formation of heterodimers between PDGFRA and PDGFRB. Phosphorylates PLCG1, PIK3R1, PTPN11, RASA1/GAP, CBL, SHC1 and NCK1. Activation of PLCG1 leads to the production of the cellular signaling molecules diacylglycerol and inositol 1,4,5-trisphosphate, mobilization of cytosolic Ca(2+) and the activation of protein kinase C. Phosphorylation of PIK3R1, the regulatory subunit of phosphatidylinositol 3-kinase, leads to the activation of the AKT1 signaling pathway. Phosphorylation of SHC1, or of the C-terminus of PTPN11, creates a binding site for GRB2, resulting in the activation of HRAS, RAF1 and down-stream MAP kinases, including MAPK1/ERK2 and/or MAPK3/ERK1. Promotes phosphorylation and activation of SRC family kinases. Promotes phosphorylation of PDCD6IP/ALIX and STAM. Receptor signaling is down-regulated by protein phosphatases that dephosphorylate the receptor and its down-stream effectors, and by rapid internalization of the activated receptor. The polypeptide is Platelet-derived growth factor receptor beta (Pdgfrb) (Mus musculus (Mouse)).